Consider the following 449-residue polypeptide: UDP-N-acetylmuramoylalanine--D-glutamate ligase (449 aa).

119–125 (GTNGKTT) is an ATP binding site.

The protein belongs to the MurCDEF family.

Its subcellular location is the cytoplasm. The catalysed reaction is UDP-N-acetyl-alpha-D-muramoyl-L-alanine + D-glutamate + ATP = UDP-N-acetyl-alpha-D-muramoyl-L-alanyl-D-glutamate + ADP + phosphate + H(+). It participates in cell wall biogenesis; peptidoglycan biosynthesis. In terms of biological role, cell wall formation. Catalyzes the addition of glutamate to the nucleotide precursor UDP-N-acetylmuramoyl-L-alanine (UMA). The protein is UDP-N-acetylmuramoylalanine--D-glutamate ligase of Lactococcus lactis subsp. cremoris (strain SK11).